Reading from the N-terminus, the 171-residue chain is Outer membrane lipoprotein Blc (171 aa).

Positions 1–15 (MRAIFLILCSVLLNG) are cleaved as a signal peptide. C16 is lipidated: N-palmitoyl cysteine. Residue C16 is the site of S-diacylglycerol cysteine attachment.

Belongs to the calycin superfamily. Lipocalin family. In terms of assembly, homodimer.

It localises to the cell outer membrane. In terms of biological role, involved in the storage or transport of lipids necessary for membrane maintenance under stressful conditions. Displays a binding preference for lysophospholipids. This chain is Outer membrane lipoprotein Blc (blc), found in Vibrio cholerae serotype O1 (strain ATCC 39315 / El Tor Inaba N16961).